Reading from the N-terminus, the 64-residue chain is MKIEVKDNNIEQALRVLKRKLQRDGFFKVVKLKSVYEKPSEKKKRILQENIKRVKKLNKLKNRI.

This sequence belongs to the bacterial ribosomal protein bS21 family.

This is Small ribosomal subunit protein bS21 from Pelagibacter ubique (strain HTCC1062).